A 413-amino-acid polypeptide reads, in one-letter code: Multifunctional CCA protein (413 aa).

Positions 8 and 11 each coordinate ATP. Residues G8 and R11 each coordinate CTP. 2 residues coordinate Mg(2+): D21 and D23. Residues R91, R137, and R140 each coordinate ATP. Residues R91, R137, and R140 each coordinate CTP. An HD domain is found at 225–326 (TGVHVMMVID…ANLLQGVDAY (102 aa)).

It belongs to the tRNA nucleotidyltransferase/poly(A) polymerase family. Bacterial CCA-adding enzyme type 1 subfamily. In terms of assembly, monomer. Can also form homodimers and oligomers. The cofactor is Mg(2+). Requires Ni(2+) as cofactor.

The catalysed reaction is a tRNA precursor + 2 CTP + ATP = a tRNA with a 3' CCA end + 3 diphosphate. It carries out the reaction a tRNA with a 3' CCA end + 2 CTP + ATP = a tRNA with a 3' CCACCA end + 3 diphosphate. Its function is as follows. Catalyzes the addition and repair of the essential 3'-terminal CCA sequence in tRNAs without using a nucleic acid template. Adds these three nucleotides in the order of C, C, and A to the tRNA nucleotide-73, using CTP and ATP as substrates and producing inorganic pyrophosphate. tRNA 3'-terminal CCA addition is required both for tRNA processing and repair. Also involved in tRNA surveillance by mediating tandem CCA addition to generate a CCACCA at the 3' terminus of unstable tRNAs. While stable tRNAs receive only 3'-terminal CCA, unstable tRNAs are marked with CCACCA and rapidly degraded. This chain is Multifunctional CCA protein, found in Nitrosospira multiformis (strain ATCC 25196 / NCIMB 11849 / C 71).